The sequence spans 932 residues: Lipoxygenase 2.2, chloroplastic (932 aa).

Positions Met-79 to Pro-219 constitute a PLAT domain. The 710-residue stretch at Ser-223–Ile-932 folds into the Lipoxygenase domain. Residues Pro-270–Tyr-284 show a composition bias toward basic and acidic residues. The disordered stretch occupies residues Pro-270–Met-311. Basic residues predominate over residues Pro-285–Arg-294. A compositionally biased stretch (basic and acidic residues) spans Ser-295 to Met-311. Fe cation contacts are provided by His-588, His-593, His-778, Asn-782, and Ile-932.

It belongs to the lipoxygenase family. The cofactor is Fe cation.

The protein localises to the plastid. The protein resides in the chloroplast. The catalysed reaction is (9Z,12Z)-octadecadienoate + O2 = (13S)-hydroperoxy-(9Z,11E)-octadecadienoate. The enzyme catalyses (9Z,12Z,15Z)-octadecatrienoate + O2 = (13S)-hydroperoxy-(9Z,11E,15Z)-octadecatrienoate. The protein operates within lipid metabolism; oxylipin biosynthesis. Functionally, plant lipoxygenase may be involved in a number of diverse aspects of plant physiology including growth and development, pest resistance, and senescence or responses to wounding. This enzyme exhibits linoleate 13-lipoxygenase activity. In Hordeum vulgare (Barley), this protein is Lipoxygenase 2.2, chloroplastic (LOX2.2).